Here is a 230-residue protein sequence, read N- to C-terminus: Putative N-acetylmannosamine-6-phosphate 2-epimerase (230 aa).

The protein belongs to the NanE family.

It carries out the reaction an N-acyl-D-glucosamine 6-phosphate = an N-acyl-D-mannosamine 6-phosphate. It functions in the pathway amino-sugar metabolism; N-acetylneuraminate degradation; D-fructose 6-phosphate from N-acetylneuraminate: step 3/5. Its function is as follows. Converts N-acetylmannosamine-6-phosphate (ManNAc-6-P) to N-acetylglucosamine-6-phosphate (GlcNAc-6-P). This chain is Putative N-acetylmannosamine-6-phosphate 2-epimerase, found in Malacoplasma penetrans (strain HF-2) (Mycoplasma penetrans).